We begin with the raw amino-acid sequence, 224 residues long: MLLKDLPEDARPREKLLARGPAALSDAELLALLLRTGLPGKNALQMGQELVDTFGGVAGLLHTGPEALKSIKGLGPAKRAELVAVLELARRALAEELKEKALFSTPQAVRDYLQLQLGGRPHEIFAVLFLDSQHRLIALEELFRGTLTQTSVYPREVVVRALALNAASVVLAHNHPSGAATPSRADEALTQTLKSALALVDVRVLDHFVVTSTQAVSMAELGLL.

Residues 102–224 (LFSTPQAVRD…AVSMAELGLL (123 aa)) enclose the MPN domain. Residues His173, His175, and Asp186 each coordinate Zn(2+). The JAMM motif signature appears at 173–186 (HNHPSGAATPSRAD).

The protein belongs to the UPF0758 family.

In Polaromonas sp. (strain JS666 / ATCC BAA-500), this protein is UPF0758 protein Bpro_0948.